We begin with the raw amino-acid sequence, 155 residues long: Ribosome maturation factor RimP (155 aa).

It belongs to the RimP family.

The protein resides in the cytoplasm. Required for maturation of 30S ribosomal subunits. The protein is Ribosome maturation factor RimP of Bacteroides thetaiotaomicron (strain ATCC 29148 / DSM 2079 / JCM 5827 / CCUG 10774 / NCTC 10582 / VPI-5482 / E50).